A 250-amino-acid chain; its full sequence is Tripartite motif-containing protein 73 (250 aa).

The segment at 16–57 (CPICLEVFKESLMLQCGHSYCKGCLVSLSYHLDTKVRCPMCW) adopts an RING-type zinc-finger fold. Residues 84 to 125 (PEPKVCVHHRNPLSLFCEKDQELICGLCGLLGSHQHHPVTPV) form a B box-type zinc finger. C89, H92, C111, and H117 together coordinate Zn(2+). 2 coiled-coil regions span residues 125–169 (VSTV…NESD) and 204–235 (LVASLDMQLEQAQGTRERLAQAECVLEQFGNE).

Belongs to the TRIM/RBCC family.

The polypeptide is Tripartite motif-containing protein 73 (TRIM73) (Homo sapiens (Human)).